The sequence spans 360 residues: uncharacterized protein (360 aa).

One can recognise an ABC transporter domain in the interval 4 to 235; sequence LSLQHIQKIY…PANMFVSGFI (232 aa). 37–44 contacts ATP; it reads GPSGCGKS.

It belongs to the ABC transporter superfamily.

This is an uncharacterized protein from Escherichia coli (strain K12).